The chain runs to 262 residues: 3-deoxy-manno-octulosonate cytidylyltransferase (262 aa).

Belongs to the KdsB family.

Its subcellular location is the cytoplasm. It catalyses the reaction 3-deoxy-alpha-D-manno-oct-2-ulosonate + CTP = CMP-3-deoxy-beta-D-manno-octulosonate + diphosphate. The protein operates within nucleotide-sugar biosynthesis; CMP-3-deoxy-D-manno-octulosonate biosynthesis; CMP-3-deoxy-D-manno-octulosonate from 3-deoxy-D-manno-octulosonate and CTP: step 1/1. It functions in the pathway bacterial outer membrane biogenesis; lipopolysaccharide biosynthesis. Activates KDO (a required 8-carbon sugar) for incorporation into bacterial lipopolysaccharide in Gram-negative bacteria. This Koribacter versatilis (strain Ellin345) protein is 3-deoxy-manno-octulosonate cytidylyltransferase.